A 157-amino-acid polypeptide reads, in one-letter code: uncharacterized protein (157 aa).

A helical membrane pass occupies residues 42 to 64 (SCIRLIVMFICVAMITCPNSLRF).

It localises to the membrane. This is an uncharacterized protein from Saccharomyces cerevisiae (strain ATCC 204508 / S288c) (Baker's yeast).